The primary structure comprises 386 residues: MGMQMKNFKKMMTLMALCFSVAITTSGYATTLPDIPEPLKNGTGAIDNNGVIYVGLGTAGTSWYKIDLKKQHKDWERIKSFPGGAREQSVSVFLNDELYVFGGVGKKNSESPLQVYSDVYKYSPVKNTWQKVDTISPVGLTGHTGVKLNETMVLITGGVNEHIFDKYFIDIAAAAADESEKNKVIYNYFNKPAKDYFFNKIVFIYNAKENTWKNAGELPGAGTAGSSSVMGNNFLMLINGELKPGLRTDVIYRAMWDNDKLTWLKNSQLPPSPGEQQQEGLAGAFSGYSHGVLLVGGGANFPGAKQNYTNGKFYSHEGINKKWRDEVYGLINGHWQYMGKMKQPLGYGVSVSYGDEVFLIGGENAKGKPVSSVTSFTMRDGNLLIK.

The N-terminal stretch at 1-29 (MGMQMKNFKKMMTLMALCFSVAITTSGYA) is a signal peptide. 7 Kelch repeats span residues 51–95 (VIYV…VFLN), 97–149 (ELYV…VKLN), 151–186 (TMVL…KVIY), 187–232 (NYFN…VMGN), 235–284 (LMLI…LAGA), 306–355 (QNYT…SYGD), and 357–386 (VFLI…LLIK). Catalysis depends on Glu-241, which acts as the Proton acceptor.

It belongs to the NanM family. Homodimer.

The protein localises to the periplasm. It carries out the reaction N-acetyl-alpha-neuraminate = N-acetyl-beta-neuraminate. Converts alpha-N-acetylneuranimic acid (Neu5Ac) to the beta-anomer, accelerating the equilibrium between the alpha- and beta-anomers. Probably facilitates sialidase-negative bacteria to compete successfully for limited amounts of extracellular Neu5Ac, which is likely taken up in the beta-anomer. In addition, the rapid removal of sialic acid from solution might be advantageous to the bacterium to damp down host responses. The sequence is that of N-acetylneuraminate epimerase from Salmonella typhimurium (strain LT2 / SGSC1412 / ATCC 700720).